A 220-amino-acid chain; its full sequence is Large ribosomal subunit protein bL21 (220 aa).

The segment at 109-158 (SKKVAAKPATSEEKAAEEKPAKAKKEAAEKGASPRETKAAPLFSAPEGEP) is disordered. Basic and acidic residues predominate over residues 118–146 (TSEEKAAEEKPAKAKKEAAEKGASPRETK).

The protein belongs to the bacterial ribosomal protein bL21 family. Part of the 50S ribosomal subunit. Contacts protein L20.

Functionally, this protein binds to 23S rRNA in the presence of protein L20. The chain is Large ribosomal subunit protein bL21 from Chelativorans sp. (strain BNC1).